The sequence spans 334 residues: DNA-directed RNA polymerase subunit alpha (334 aa).

Residues 1 to 232 (MIREKLKVST…DLFIPFLHAE (232 aa)) form an alpha N-terminal domain (alpha-NTD) region. The alpha C-terminal domain (alpha-CTD) stretch occupies residues 267 to 334 (QKEITLKSIF…NILQIENHFV (68 aa)).

The protein belongs to the RNA polymerase alpha chain family. In plastids the minimal PEP RNA polymerase catalytic core is composed of four subunits: alpha, beta, beta', and beta''. When a (nuclear-encoded) sigma factor is associated with the core the holoenzyme is formed, which can initiate transcription.

It is found in the plastid. The protein localises to the chloroplast. It catalyses the reaction RNA(n) + a ribonucleoside 5'-triphosphate = RNA(n+1) + diphosphate. DNA-dependent RNA polymerase catalyzes the transcription of DNA into RNA using the four ribonucleoside triphosphates as substrates. The polypeptide is DNA-directed RNA polymerase subunit alpha (Pisum sativum (Garden pea)).